Consider the following 460-residue polypeptide: MGKEDKTHINVVVIGHVDSGKSTTTGHLIYQCGGIDKRTIEKFEKEAAELGKGSFKYAWVLDKLKAERERGITIDIALWKFETPKYYVTVIDAPGHRDFIKNMITGTSQADCAILIIAAGTGEFEAGISKDGQTREHALLAYTLGVKQLIVAINKMDTANWAEARYQEIIKETSNFIKKVGFNPKAVAFVPISGFNGDNMLTPSTNCPWYKGWEKETKAGKFTGKTLLEAIDSIEPPKRPTDKPLRLPLQDVYKIGGIGTVPVGRIETGVLKPGMVVTFAPSNVTTEVKSVEMHHEQLAEGQPGDNVGFNVKNVSVKEIRRGNVAGDSKNDPPMGAASFTAQVIVMNHPGQVGAGYAPVLDCHTAHIACKFAELLEKIDRRTGKATESAPKFIKSGDSAIVKMIPSKPMCVEAFTDYPPLGRFAVRDMRQTVAVGVIKAVEKSSAAAAKVTKSAAKAAKK.

N,N,N-trimethylglycine is present on Gly-2. Lys-3 is subject to N6,N6-dimethyllysine; alternate. Lys-3 bears the N6-methyllysine; alternate mark. A tr-type G domain is found at 6–241; it reads KTHINVVVIG…DSIEPPKRPT (236 aa). The interval 15 to 22 is G1; sequence GHVDSGKS. 15-22 serves as a coordination point for GTP; sequence GHVDSGKS. Residues 71–75 form a G2 region; sequence GITID. Lys-80 bears the N6,N6,N6-trimethyllysine mark. The segment at 92 to 95 is G3; sequence DAPG. GTP is bound by residues 92-96 and 154-157; these read DAPGH and NKMD. Residues 154–157 form a G4 region; the sequence is NKMD. Positions 193–195 are G5; that stretch reads SGF. The residue at position 317 (Lys-317) is an N6,N6-dimethyllysine; alternate. Residue Lys-317 is modified to N6-methyllysine; alternate. Lys-391 carries the N6-methyllysine modification.

Belongs to the TRAFAC class translation factor GTPase superfamily. Classic translation factor GTPase family. EF-Tu/EF-1A subfamily.

Its subcellular location is the cytoplasm. This protein promotes the GTP-dependent binding of aminoacyl-tRNA to the A-site of ribosomes during protein biosynthesis. This Hypocrea jecorina (Trichoderma reesei) protein is Elongation factor 1-alpha (tef1).